Here is a 293-residue protein sequence, read N- to C-terminus: Bifunctional protein FolD (293 aa).

NADP(+) contacts are provided by residues 169 to 171 (GRG), Thr-196, and Val-237.

It belongs to the tetrahydrofolate dehydrogenase/cyclohydrolase family. In terms of assembly, homodimer.

It carries out the reaction (6R)-5,10-methylene-5,6,7,8-tetrahydrofolate + NADP(+) = (6R)-5,10-methenyltetrahydrofolate + NADPH. It catalyses the reaction (6R)-5,10-methenyltetrahydrofolate + H2O = (6R)-10-formyltetrahydrofolate + H(+). Its pathway is one-carbon metabolism; tetrahydrofolate interconversion. Its function is as follows. Catalyzes the oxidation of 5,10-methylenetetrahydrofolate to 5,10-methenyltetrahydrofolate and then the hydrolysis of 5,10-methenyltetrahydrofolate to 10-formyltetrahydrofolate. This Leifsonia xyli subsp. xyli (strain CTCB07) protein is Bifunctional protein FolD.